The chain runs to 615 residues: MSESQRHEAREDGFTTPHESGLSSEDAAELEELRREAAALREQLENAVGPQSGLRSARDVHQLEARIDSLAARNAKLMDTLKEARQQLLALREEVDRLGQPPSGYGVLLASHEDDTVDVFTSGRKMRLTCSPNIDVKALKQGQTVRLNEALTVVEAGTFEAVGEISTLREILSDGHRALVVGHADEERIVWLAEPLVSVEHLPDNEVAGPELDDDRPRRLRPGDSLLVDTKAGYAFERIPKAEVEDLVLEEVPDVSYSDIGGLTRQIEQIRDAVELPFLHKDLYREYSLRPPKGVLLYGPPGCGKTLIAKAVANSLAKKMAEVRGDDAREAKSYFLNIKGPELLNKFVGETERHIRLIFQRAREKASEGTPVIVFFDEMDSIFRTRGTGVSSDVETTVVPQLLSEIDGVEGLENVIVIGASNREDMIDPAILRPGRLDVKIKIERPDAEAAQDIFSKYLTEELPVNEDDLAEFGGDRSLTIKAMIEKVVDRMYAEIDDNRFLEVTYANGDKEVMYFKDFNSGAMIQNVVDRAKKYAIKSVLETGQKGLRIQHLLDSIVDEFAENEDLPNTTNPDDWARISGKKGERIVYIRTLVTGKSSSANRAIDTESNLGQYL.

A compositionally biased stretch (basic and acidic residues) spans 1–13 (MSESQRHEAREDG). Positions 1 to 32 (MSESQRHEAREDGFTTPHESGLSSEDAAELEE) are disordered. Positions 22–100 (LSSEDAAELE…LREEVDRLGQ (79 aa)) form a coiled coil. 302–307 (GCGKTL) contacts ATP. The interval 614–615 (YL) is docks into pockets in the proteasome alpha-ring.

This sequence belongs to the AAA ATPase family. As to quaternary structure, homohexamer. Assembles into a hexameric ring structure that caps the 20S proteasome core. Strongly interacts with the prokaryotic ubiquitin-like protein Pup through a hydrophobic interface; the interacting region of ARC lies in its N-terminal coiled-coil domain. There is one Pup binding site per ARC hexamer ring. Upon ATP-binding, the C-terminus of ARC interacts with the alpha-rings of the proteasome core, possibly by binding to the intersubunit pockets.

Its pathway is protein degradation; proteasomal Pup-dependent pathway. In terms of biological role, ATPase which is responsible for recognizing, binding, unfolding and translocation of pupylated proteins into the bacterial 20S proteasome core particle. May be essential for opening the gate of the 20S proteasome via an interaction with its C-terminus, thereby allowing substrate entry and access to the site of proteolysis. Thus, the C-termini of the proteasomal ATPase may function like a 'key in a lock' to induce gate opening and therefore regulate proteolysis. The polypeptide is Proteasome-associated ATPase (Mycobacterium sp. (strain JLS)).